The chain runs to 64 residues: Epidermal growth factor (64 aa).

The N-terminal stretch at 1–21 is a signal peptide; that stretch reads MMRHLLLVGAAILIFVSDAQA. Residue Gln22 is modified to Pyrrolidone carboxylic acid. Positions 25–61 constitute an EGF-like domain; sequence GEDPCQIVRCSYGANCIAYGDTAICECPFGYSGIRCQ. Cystine bridges form between Cys29–Cys40, Cys34–Cys49, and Cys51–Cys60.

In terms of tissue distribution, albumen gland. Up-regulated in adult CNS after axotomy.

The protein resides in the secreted. Its function is as follows. Induces neurite outgrowth in specific adult neurons in vitro. This chain is Epidermal growth factor, found in Lymnaea stagnalis (Great pond snail).